Here is a 318-residue protein sequence, read N- to C-terminus: Electron transfer flavoprotein subunit alpha (318 aa).

257–285 serves as a coordination point for FAD; sequence LYIALGISGAIQHRAGMQTSKTIVAVNKD.

This sequence belongs to the ETF alpha-subunit/FixB family. In terms of assembly, heterodimer of an alpha and a beta subunit. It depends on FAD as a cofactor.

In terms of biological role, the electron transfer flavoprotein serves as a specific electron acceptor for other dehydrogenases. It transfers the electrons to the main respiratory chain via ETF-ubiquinone oxidoreductase (ETF dehydrogenase). The chain is Electron transfer flavoprotein subunit alpha (etfA) from Mycobacterium tuberculosis (strain CDC 1551 / Oshkosh).